We begin with the raw amino-acid sequence, 377 residues long: Succinyl-diaminopimelate desuccinylase (377 aa).

H67 serves as a coordination point for Zn(2+). D69 is a catalytic residue. D100 is a Zn(2+) binding site. The active-site Proton acceptor is E134. Zn(2+)-binding residues include E135, E163, and H349.

It belongs to the peptidase M20A family. DapE subfamily. Homodimer. Zn(2+) serves as cofactor. It depends on Co(2+) as a cofactor.

It catalyses the reaction N-succinyl-(2S,6S)-2,6-diaminopimelate + H2O = (2S,6S)-2,6-diaminopimelate + succinate. It participates in amino-acid biosynthesis; L-lysine biosynthesis via DAP pathway; LL-2,6-diaminopimelate from (S)-tetrahydrodipicolinate (succinylase route): step 3/3. Catalyzes the hydrolysis of N-succinyl-L,L-diaminopimelic acid (SDAP), forming succinate and LL-2,6-diaminopimelate (DAP), an intermediate involved in the bacterial biosynthesis of lysine and meso-diaminopimelic acid, an essential component of bacterial cell walls. The protein is Succinyl-diaminopimelate desuccinylase of Glaesserella parasuis serovar 5 (strain SH0165) (Haemophilus parasuis).